Consider the following 316-residue polypeptide: Ribosomal RNA large subunit methyltransferase F (316 aa).

The segment at 200 to 222 is disordered; that stretch reads EEANKSTSRKVSNLNPKEKKNTN. The segment covering 204 to 214 has biased composition (polar residues); that stretch reads KSTSRKVSNLN.

This sequence belongs to the methyltransferase superfamily. METTL16/RlmF family.

Its subcellular location is the cytoplasm. It carries out the reaction adenosine(1618) in 23S rRNA + S-adenosyl-L-methionine = N(6)-methyladenosine(1618) in 23S rRNA + S-adenosyl-L-homocysteine + H(+). Its function is as follows. Specifically methylates the adenine in position 1618 of 23S rRNA. The chain is Ribosomal RNA large subunit methyltransferase F from Flavobacterium johnsoniae (strain ATCC 17061 / DSM 2064 / JCM 8514 / BCRC 14874 / CCUG 350202 / NBRC 14942 / NCIMB 11054 / UW101) (Cytophaga johnsonae).